Consider the following 127-residue polypeptide: DNA-directed RNA polymerase subunit omega (127 aa).

The protein belongs to the RNA polymerase subunit omega family. The RNAP catalytic core consists of 2 alpha, 1 beta, 1 beta' and 1 omega subunit. When a sigma factor is associated with the core the holoenzyme is formed, which can initiate transcription.

The enzyme catalyses RNA(n) + a ribonucleoside 5'-triphosphate = RNA(n+1) + diphosphate. In terms of biological role, promotes RNA polymerase assembly. Latches the N- and C-terminal regions of the beta' subunit thereby facilitating its interaction with the beta and alpha subunits. In Rickettsia prowazekii (strain Madrid E), this protein is DNA-directed RNA polymerase subunit omega (rpoZ).